Reading from the N-terminus, the 80-residue chain is UPF0346 protein LSEI_1394 (80 aa).

The protein belongs to the UPF0346 family.

This is UPF0346 protein LSEI_1394 from Lacticaseibacillus paracasei (strain ATCC 334 / BCRC 17002 / CCUG 31169 / CIP 107868 / KCTC 3260 / NRRL B-441) (Lactobacillus paracasei).